The primary structure comprises 1491 residues: Pleckstrin homology domain-containing family H member 2 (1491 aa).

Residues 19 to 177 are a coiled coil; that stretch reads ALEAQLMKFR…ELQEKKISCV (159 aa). Disordered stretches follow at residues 232 to 435, 506 to 546, and 612 to 668; these read AEKP…PFQP, DDGL…LHRF, and SSSP…SDYA. Positions 253–264 are enriched in polar residues; sequence TSCSSEQNQKTR. The segment covering 374–385 has biased composition (basic and acidic residues); sequence KEQDSSSDELNK. Over residues 392–406 the composition is skewed to polar residues; it reads LDYTSSSSEANTPSP. Positions 657-666 are enriched in low complexity; the sequence is SDSSAASESD. PH domains follow at residues 702-796 and 810-918; these read PLEK…SVLR and KPAV…VAAG. The MyTH4 domain maps to 954-1109; the sequence is HSKEGILSPL…PSRMEILSTL (156 aa). An FERM domain is found at 1120 to 1449; the sequence is FSIPVHFMNG…SYINSFHQQK (330 aa). The disordered stretch occupies residues 1466 to 1491; sequence QAPQARVMGSQPPLSNSRPTKGPTLL.

As to quaternary structure, self-associates. Interacts with TGFB1I1. Expressed in the kidney and testis. Expressed in the kidney exclusively by glomerular podocytes.

The protein resides in the cytoplasm. Its subcellular location is the cytoskeleton. It is found in the cell membrane. It localises to the cell projection. The protein localises to the lamellipodium. Its function is as follows. In the kidney glomerulus may play a role in linking podocyte foot processes to the glomerular basement membrane. May be involved in stabilization of F-actin by attenuating its depolymerization. Can recruit TGFB1I1 from focal adhesions to podocyte lamellipodia. In Mus musculus (Mouse), this protein is Pleckstrin homology domain-containing family H member 2 (Plekhh2).